Reading from the N-terminus, the 242-residue chain is Triosephosphate isomerase (242 aa).

Asparagine 9–lysine 11 is a substrate binding site. Residue histidine 96 is the Electrophile of the active site. The Proton acceptor role is filled by glutamate 165. Substrate contacts are provided by residues glycine 171, serine 204, and glycine 225–glycine 226.

Belongs to the triosephosphate isomerase family. In terms of assembly, homodimer.

It localises to the cytoplasm. The catalysed reaction is D-glyceraldehyde 3-phosphate = dihydroxyacetone phosphate. It participates in carbohydrate biosynthesis; gluconeogenesis. It functions in the pathway carbohydrate degradation; glycolysis; D-glyceraldehyde 3-phosphate from glycerone phosphate: step 1/1. Involved in the gluconeogenesis. Catalyzes stereospecifically the conversion of dihydroxyacetone phosphate (DHAP) to D-glyceraldehyde-3-phosphate (G3P). This is Triosephosphate isomerase from Synechocystis sp. (strain ATCC 27184 / PCC 6803 / Kazusa).